Consider the following 208-residue polypeptide: N-(5'-phosphoribosyl)anthranilate isomerase (208 aa).

Belongs to the TrpF family.

The enzyme catalyses N-(5-phospho-beta-D-ribosyl)anthranilate = 1-(2-carboxyphenylamino)-1-deoxy-D-ribulose 5-phosphate. Its pathway is amino-acid biosynthesis; L-tryptophan biosynthesis; L-tryptophan from chorismate: step 3/5. This chain is N-(5'-phosphoribosyl)anthranilate isomerase, found in Neisseria gonorrhoeae (strain NCCP11945).